Reading from the N-terminus, the 287-residue chain is Probable endonuclease 4 (287 aa).

9 residues coordinate Zn(2+): His-69, His-109, Glu-144, Asp-178, His-181, His-215, Asp-228, His-230, and Glu-260.

The protein belongs to the AP endonuclease 2 family. The cofactor is Zn(2+).

It carries out the reaction Endonucleolytic cleavage to 5'-phosphooligonucleotide end-products.. In terms of biological role, endonuclease IV plays a role in DNA repair. It cleaves phosphodiester bonds at apurinic or apyrimidinic (AP) sites, generating a 3'-hydroxyl group and a 5'-terminal sugar phosphate. In Thermotoga petrophila (strain ATCC BAA-488 / DSM 13995 / JCM 10881 / RKU-1), this protein is Probable endonuclease 4.